The primary structure comprises 353 residues: Rhodopsin (353 aa).

At 1–36 (MNGTEGPYFYVPMVNTSGIVRSPYEYPQYYLVNPAA) the chain is on the extracellular side. Residues Asn-2 and Asn-15 are each glycosylated (N-linked (GlcNAc...) asparagine). Residues 37-61 (YAALGAYMFLLILVGFPINFLTLYV) form a helical membrane-spanning segment. Topologically, residues 62 to 73 (TIEHKKLRTPLN) are cytoplasmic. The chain crosses the membrane as a helical span at residues 74–96 (YILLNLAVADLFMVFGGFTTTMY). Over 97–110 (TSMHGYFVLGRLGC) the chain is Extracellular. Cys-110 and Cys-187 are joined by a disulfide. Residues 111-133 (NIEGFFATLGGEIALWSLVVLAI) form a helical membrane-spanning segment. The 'Ionic lock' involved in activated form stabilization motif lies at 134–136 (ERW). Topologically, residues 134-152 (ERWVVVCKPISNFRFGENH) are cytoplasmic. The chain crosses the membrane as a helical span at residues 153-173 (AIMGLAFTWLMAMACAAPPLV). The Extracellular portion of the chain corresponds to 174 to 202 (GWSRYIPEGMQCSCGIDYYTRAEGFNNES). Asn-200 carries N-linked (GlcNAc...) asparagine glycosylation. A helical transmembrane segment spans residues 203-224 (FVIYMFVCHFLIPLMVVFFCYG). At 225 to 252 (RLLCAVKEAAAAQQESETTQRAEREVTR) the chain is on the cytoplasmic side. A helical transmembrane segment spans residues 253-274 (MVVIMVIAFLICWCPYAGVAWW). At 275–286 (IFTHQGSDFGPV) the chain is on the extracellular side. The chain crosses the membrane as a helical span at residues 287 to 308 (FMTIPAFFAKSSSIYNPMIYIC). Lys-296 bears the N6-(retinylidene)lysine mark. Residues 309–353 (LNKQFRHCMITTLCCGKNPFEEEEGASTASKTEASSVSSSSVSPA) are Cytoplasmic-facing. 2 S-palmitoyl cysteine lipidation sites follow: Cys-322 and Cys-323. Residues 331 to 353 (EEGASTASKTEASSVSSSSVSPA) form a disordered region. A compositionally biased stretch (low complexity) spans 334–353 (ASTASKTEASSVSSSSVSPA).

The protein belongs to the G-protein coupled receptor 1 family. Opsin subfamily. Post-translationally, phosphorylated on some or all of the serine and threonine residues present in the C-terminal region. Contains one covalently linked retinal chromophore.

Its subcellular location is the membrane. The protein resides in the cell projection. The protein localises to the cilium. It is found in the photoreceptor outer segment. Its function is as follows. Photoreceptor required for image-forming vision at low light intensity. While most salt water fish species use retinal as chromophore, most freshwater fish use 3-dehydroretinal, or a mixture of retinal and 3-dehydroretinal. Light-induced isomerization of 11-cis to all-trans retinal triggers a conformational change that activates signaling via G-proteins. Subsequent receptor phosphorylation mediates displacement of the bound G-protein alpha subunit by arrestin and terminates signaling. The sequence is that of Rhodopsin (rho) from Lithognathus mormyrus (Striped seabream).